The primary structure comprises 77 residues: uncharacterized protein (77 aa).

In terms of biological role, putative sugar-binding regulatory protein for the alpha-amylase gene. This is an uncharacterized protein from Streptomyces violaceus (Streptomyces venezuelae).